Reading from the N-terminus, the 298-residue chain is MQLEKMITEGSNAASAEIDRVSTLEMCRIINDEDKTVPLAVERVLPDIAAAIDVIHTQVSGGGRLIYLGAGTSGRLGILDASECPPTYGVKPGLVVGLIAGGEYAIQHAVEGAEDSREGGVNDLKNIGLTAQDVVVGIAASGRTPYVIAGLEYARQLGCRTVGISCNPGSAVSTTAEFAITPVVGAEVVTGSSRMKAGTAQKLVLNMLSTGLMIKSGKVFGNLMVDVVATNEKLHVRQVNIVKNATGCSAEQAEAALVACERNCKTAIVMVLKNLDAAEAKKRLDQHGGFIRQVLDKE.

The region spanning 55–218 (IHTQVSGGGR…STGLMIKSGK (164 aa)) is the SIS domain. The Proton donor role is filled by Glu83. Residue Glu114 is part of the active site.

The protein belongs to the GCKR-like family. MurNAc-6-P etherase subfamily. Homodimer.

It carries out the reaction N-acetyl-D-muramate 6-phosphate + H2O = N-acetyl-D-glucosamine 6-phosphate + (R)-lactate. Its pathway is amino-sugar metabolism; 1,6-anhydro-N-acetylmuramate degradation. It functions in the pathway amino-sugar metabolism; N-acetylmuramate degradation. It participates in cell wall biogenesis; peptidoglycan recycling. In terms of biological role, specifically catalyzes the cleavage of the D-lactyl ether substituent of MurNAc 6-phosphate, producing GlcNAc 6-phosphate and D-lactate. Together with AnmK, is also required for the utilization of anhydro-N-acetylmuramic acid (anhMurNAc) either imported from the medium or derived from its own cell wall murein, and thus plays a role in cell wall recycling. This is N-acetylmuramic acid 6-phosphate etherase from Escherichia coli O127:H6 (strain E2348/69 / EPEC).